The sequence spans 331 residues: Olfactory receptor 6S1 (331 aa).

Residues 1-29 (MSPDGNHSSDPTEFVLAGLPNLNSARVEL) lie on the Extracellular side of the membrane. Residue Asn-6 is glycosylated (N-linked (GlcNAc...) asparagine). Residues 30 to 50 (FSVFLLVYLLNLTGNVLIVGV) form a helical membrane-spanning segment. At 51–59 (VRADTRLQT) the chain is on the cytoplasmic side. The helical transmembrane segment at 60 to 80 (PMYFFLGNLSCLEILLTSVII) threads the bilayer. The Extracellular portion of the chain corresponds to 81–99 (PKMLSNFLSRQHTISFAAC). Cys-99 and Cys-182 are oxidised to a cystine. The helical transmembrane segment at 100–120 (ITQFYFYFFLGASEFLLLAVM) threads the bilayer. Residues 121–147 (SADRYLAICHPLRYPLLMSGAVCFRVA) lie on the Cytoplasmic side of the membrane. A helical transmembrane segment spans residues 148–168 (LACWVGGLVPVLGPTVAVALL). The Extracellular portion of the chain corresponds to 169-207 (PFCKQGAVVQHFFCDSGPLLRLACTNTKKLEETDFVLAS). Residues 208–228 (LVIVSSLLITAVSYGLIVLAV) traverse the membrane as a helical segment. At 229–242 (LSIPSASGRQKAFS) the chain is on the cytoplasmic side. The chain crosses the membrane as a helical span at residues 243-263 (TCTSHLIVVTLFYGSAIFLYV). Over 264 to 274 (RPSQSGSVDTN) the chain is Extracellular. A helical transmembrane segment spans residues 275–295 (WAVTVITTFVTPLLNPFIYAL). Residues 296-331 (RNEQVKEALKDMFRKVVAGVLGNLLLDKCLSEKAVK) lie on the Cytoplasmic side of the membrane.

Belongs to the G-protein coupled receptor 1 family.

It is found in the cell membrane. Odorant receptor. In Homo sapiens (Human), this protein is Olfactory receptor 6S1 (OR6S1).